We begin with the raw amino-acid sequence, 487 residues long: Cysteine--tRNA ligase (487 aa).

Cys27 serves as a coordination point for Zn(2+). Residues 29 to 39 (VTVYDLCHIGH) carry the 'HIGH' region motif. Residues Cys211, His236, and Glu240 each coordinate Zn(2+). The short motif at 268–272 (KMSKS) is the 'KMSKS' region element. An ATP-binding site is contributed by Lys271.

The protein belongs to the class-I aminoacyl-tRNA synthetase family. In terms of assembly, monomer. The cofactor is Zn(2+).

The protein resides in the cytoplasm. The catalysed reaction is tRNA(Cys) + L-cysteine + ATP = L-cysteinyl-tRNA(Cys) + AMP + diphosphate. In Thermodesulfovibrio yellowstonii (strain ATCC 51303 / DSM 11347 / YP87), this protein is Cysteine--tRNA ligase.